The following is a 435-amino-acid chain: tRNA modification GTPase MnmE (435 aa).

Arg-20, Glu-77, and Lys-117 together coordinate (6S)-5-formyl-5,6,7,8-tetrahydrofolate. Positions Gly-214–Leu-359 constitute a TrmE-type G domain. Residues Asn-224–Ser-229, Thr-243–Thr-249, and Asp-268–Gly-271 each bind GTP. Mg(2+)-binding residues include Ser-228 and Thr-249. Position 435 (Lys-435) interacts with (6S)-5-formyl-5,6,7,8-tetrahydrofolate.

It belongs to the TRAFAC class TrmE-Era-EngA-EngB-Septin-like GTPase superfamily. TrmE GTPase family. Homodimer. Heterotetramer of two MnmE and two MnmG subunits. Requires K(+) as cofactor.

The protein resides in the cytoplasm. Functionally, exhibits a very high intrinsic GTPase hydrolysis rate. Involved in the addition of a carboxymethylaminomethyl (cmnm) group at the wobble position (U34) of certain tRNAs, forming tRNA-cmnm(5)s(2)U34. This Bartonella henselae (strain ATCC 49882 / DSM 28221 / CCUG 30454 / Houston 1) (Rochalimaea henselae) protein is tRNA modification GTPase MnmE.